A 298-amino-acid polypeptide reads, in one-letter code: Lipoyl synthase (298 aa).

Cys40, Cys45, Cys51, Cys67, Cys71, Cys74, and Ser280 together coordinate [4Fe-4S] cluster. The region spanning 53–269 (AVRKTATFMI…KEIALSKGFS (217 aa)) is the Radical SAM core domain.

Belongs to the radical SAM superfamily. Lipoyl synthase family. It depends on [4Fe-4S] cluster as a cofactor.

It localises to the cytoplasm. It carries out the reaction [[Fe-S] cluster scaffold protein carrying a second [4Fe-4S](2+) cluster] + N(6)-octanoyl-L-lysyl-[protein] + 2 oxidized [2Fe-2S]-[ferredoxin] + 2 S-adenosyl-L-methionine + 4 H(+) = [[Fe-S] cluster scaffold protein] + N(6)-[(R)-dihydrolipoyl]-L-lysyl-[protein] + 4 Fe(3+) + 2 hydrogen sulfide + 2 5'-deoxyadenosine + 2 L-methionine + 2 reduced [2Fe-2S]-[ferredoxin]. Its pathway is protein modification; protein lipoylation via endogenous pathway; protein N(6)-(lipoyl)lysine from octanoyl-[acyl-carrier-protein]. Functionally, catalyzes the radical-mediated insertion of two sulfur atoms into the C-6 and C-8 positions of the octanoyl moiety bound to the lipoyl domains of lipoate-dependent enzymes, thereby converting the octanoylated domains into lipoylated derivatives. This chain is Lipoyl synthase, found in Bacillus thuringiensis (strain Al Hakam).